A 396-amino-acid polypeptide reads, in one-letter code: 1-deoxy-D-xylulose 5-phosphate reductoisomerase (396 aa).

NADPH contacts are provided by threonine 15, glycine 16, serine 17, isoleucine 18, glycine 41, and asparagine 129. Lysine 130 serves as a coordination point for 1-deoxy-D-xylulose 5-phosphate. Glutamate 131 contacts NADPH. Position 155 (aspartate 155) interacts with Mn(2+). 1-deoxy-D-xylulose 5-phosphate is bound by residues serine 156, glutamate 157, serine 182, and histidine 205. Glutamate 157 serves as a coordination point for Mn(2+). Residue glycine 211 participates in NADPH binding. 1-deoxy-D-xylulose 5-phosphate contacts are provided by serine 218, asparagine 223, lysine 224, and glutamate 227. Glutamate 227 contributes to the Mn(2+) binding site.

The protein belongs to the DXR family. Mg(2+) serves as cofactor. It depends on Mn(2+) as a cofactor.

The catalysed reaction is 2-C-methyl-D-erythritol 4-phosphate + NADP(+) = 1-deoxy-D-xylulose 5-phosphate + NADPH + H(+). It participates in isoprenoid biosynthesis; isopentenyl diphosphate biosynthesis via DXP pathway; isopentenyl diphosphate from 1-deoxy-D-xylulose 5-phosphate: step 1/6. Catalyzes the NADPH-dependent rearrangement and reduction of 1-deoxy-D-xylulose-5-phosphate (DXP) to 2-C-methyl-D-erythritol 4-phosphate (MEP). This Xanthomonas oryzae pv. oryzae (strain PXO99A) protein is 1-deoxy-D-xylulose 5-phosphate reductoisomerase.